Reading from the N-terminus, the 251-residue chain is Gamma-interferon-inducible lysosomal thiol reductase (251 aa).

The first 21 residues, 1–21, serve as a signal peptide directing secretion; the sequence is MFGFRLSVLLFAVCSLSACSC. The 39-residue stretch at 22 to 60 folds into the Saposin A-type domain; sequence MFVNSCKYPPSQWCDSRDIAAQCGVLEQCMKFNASPVTV. Cys-68 and Cys-71 are oxidised to a cystine. Asn-108 carries an N-linked (GlcNAc...) asparagine glycan.

This sequence belongs to the GILT family. Dimer; disulfide-linked. Highly expressed in spleen and kidney. Also detected at lower levels in liver, heart, brain, intestine and gill.

It is found in the secreted. Its subcellular location is the lysosome. In terms of biological role, lysosomal thiol reductase that can reduce protein disulfide bonds. May facilitate the complete unfolding of proteins destined for lysosomal degradation. Plays an important role in antigen processing. The chain is Gamma-interferon-inducible lysosomal thiol reductase from Carassius auratus (Goldfish).